The chain runs to 278 residues: MINEILDKVVRLLEEVRAKKPLVHSITNYITATDCANVILAVGGSPTMADYVKEVEEIASISSAVVLNMGVISDGMVESMILAGKSANKNNVPVIFDPVGAGVANFRNESAEKILSEVKIDIIRGNISEIKFICGLSSETKGVDASESDMNMGNDKKAIVAQELAKKLNCVVAITGVDDIISDGKRNVILSNGHKMLANVTGTGCMSSALCGAFAGASNDYFIAAICAILTMGISGEIAYEKSKGIGMGTFHTSLIDAISMMNENIIKEKAKVTTINR.

M48 is a binding site for substrate. Positions 124 and 175 each coordinate ATP. Residue G202 coordinates substrate.

It belongs to the Thz kinase family. Mg(2+) serves as cofactor.

The catalysed reaction is 5-(2-hydroxyethyl)-4-methylthiazole + ATP = 4-methyl-5-(2-phosphooxyethyl)-thiazole + ADP + H(+). It participates in cofactor biosynthesis; thiamine diphosphate biosynthesis; 4-methyl-5-(2-phosphoethyl)-thiazole from 5-(2-hydroxyethyl)-4-methylthiazole: step 1/1. Functionally, catalyzes the phosphorylation of the hydroxyl group of 4-methyl-5-beta-hydroxyethylthiazole (THZ). This is Hydroxyethylthiazole kinase from Clostridium botulinum (strain Eklund 17B / Type B).